We begin with the raw amino-acid sequence, 156 residues long: Transcriptional repressor NrdR (156 aa).

Residues 3–34 (CPFCSETDTKVIDSRLVADGAQVRRRRECLTC) fold into a zinc finger. Residues 49–139 (PRVIKQDGTR…VYRSFQDLSE (91 aa)) form the ATP-cone domain.

This sequence belongs to the NrdR family. It depends on Zn(2+) as a cofactor.

In terms of biological role, negatively regulates transcription of bacterial ribonucleotide reductase nrd genes and operons by binding to NrdR-boxes. The polypeptide is Transcriptional repressor NrdR (Saccharophagus degradans (strain 2-40 / ATCC 43961 / DSM 17024)).